Consider the following 336-residue polypeptide: Urokinase plasminogen activator surface receptor (336 aa).

The N-terminal stretch at 1–23 (MGHPLLLPLLLLLLHTGVPASWG) is a signal peptide. UPAR/Ly6 domains are found at residues 24-111 (LRCM…VTFP), 116-208 (LECI…LSLA), and 215-302 (HRCY…EDIQ). 3 disulfide bridges follow: cysteine 26–cysteine 47, cysteine 29–cysteine 35, and cysteine 40–cysteine 68. Asparagine 75 carries an N-linked (GlcNAc...) asparagine glycan. 11 cysteine pairs are disulfide-bonded: cysteine 94–cysteine 99, cysteine 118–cysteine 145, cysteine 121–cysteine 128, cysteine 138–cysteine 170, cysteine 176–cysteine 193, cysteine 194–cysteine 199, cysteine 217–cysteine 245, cysteine 220–cysteine 228, cysteine 238–cysteine 264, cysteine 270–cysteine 288, and cysteine 289–cysteine 294. 2 N-linked (GlcNAc...) asparagine glycosylation sites follow: asparagine 195 and asparagine 223.

As to quaternary structure, monomer. Interacts (via the UPAR/Ly6 domains) with SRPX2. Interacts with MRC2. Interacts with FAP (seprase); the interaction occurs at the cell surface of invadopodia membrane. Interacts with SORL1 (via N-terminal ectodomain); this interaction decreases PLAUR internalization. The ternary complex composed of PLAUR-PLAU-SERPINE1 also interacts with SORL1.

It is found in the cell membrane. Its subcellular location is the cell projection. It localises to the invadopodium membrane. Its function is as follows. Acts as a receptor for urokinase plasminogen activator. Plays a role in localizing and promoting plasmin formation. Mediates the proteolysis-independent signal transduction activation effects of U-PA. It is subject to negative-feedback regulation by U-PA which cleaves it into an inactive form. The chain is Urokinase plasminogen activator surface receptor (PLAUR) from Aotus trivirgatus (Three-striped night monkey).